The sequence spans 451 residues: Macrophage scavenger receptor types I and II (451 aa).

Residues 1 to 50 (MEQWDHFHNQQEDTDSCSESVKFDARSMTALLPPNPKNSPSLQEKLKSFK) lie on the Cytoplasmic side of the membrane. S27 is subject to Phosphoserine. Residues 51–76 (AALIALYLLVFAVLIPLIGIVAAQLL) traverse the membrane as a helical; Signal-anchor for type II membrane protein segment. Residues 77–109 (KWETKNCSVSSTNANDITQSLTGKGNDSEEEMR) form a spacer region. The Extracellular portion of the chain corresponds to 77-451 (KWETKNCSVS…SEDAGVTCTL (375 aa)). 7 N-linked (GlcNAc...) asparagine glycosylation sites follow: N82, N102, N143, N184, N221, N249, and N267. Residues 171 to 255 (NAIDEISKSL…VLNNITNDLR (85 aa)) adopt a coiled-coil conformation. Residues 267–346 (NITLIQGPPG…EKGSGNTLTP (80 aa)) form a disordered region. Residues 273–341 (GPPGPPGEKG…KGQKGEKGSG (69 aa)) enclose the Collagen-like domain. Residues 350-450 (VRLVGGSGPH…HSEDAGVTCT (101 aa)) form the SRCR domain. 3 cysteine pairs are disulfide-bonded: C375–C439, C388–C449, and C419–C429.

As to quaternary structure, homotrimer. Interacts with MYO18A. In terms of tissue distribution, isoform I, isoform II and isoform III are expressed in monocyte-derived macrophages. Isoform I and isoform II are expressed in the liver, placenta and brain.

The protein localises to the membrane. Its function is as follows. Membrane glycoproteins implicated in the pathologic deposition of cholesterol in arterial walls during atherogenesis. Two types of receptor subunits exist. These receptors mediate the endocytosis of a diverse group of macromolecules, including modified low density lipoproteins (LDL). Isoform III does not internalize acetylated LDL. In Homo sapiens (Human), this protein is Macrophage scavenger receptor types I and II (MSR1).